The sequence spans 93 residues: Small ribosomal subunit protein uS19 (93 aa).

The tract at residues 73–93 (EFSPTRTFRGHVKDDRKSKRR) is disordered. Residues 83 to 93 (HVKDDRKSKRR) are compositionally biased toward basic and acidic residues.

It belongs to the universal ribosomal protein uS19 family.

Protein S19 forms a complex with S13 that binds strongly to the 16S ribosomal RNA. The sequence is that of Small ribosomal subunit protein uS19 from Streptomyces coelicolor (strain ATCC BAA-471 / A3(2) / M145).